The sequence spans 232 residues: Orotidine 5'-phosphate decarboxylase (232 aa).

Substrate is bound by residues D16, K38, 65-74 (DLKLHDIGNT), T119, R180, Q189, G209, and R210. The Proton donor role is filled by K67.

The protein belongs to the OMP decarboxylase family. Type 1 subfamily. In terms of assembly, homodimer.

It catalyses the reaction orotidine 5'-phosphate + H(+) = UMP + CO2. It participates in pyrimidine metabolism; UMP biosynthesis via de novo pathway; UMP from orotate: step 2/2. Catalyzes the decarboxylation of orotidine 5'-monophosphate (OMP) to uridine 5'-monophosphate (UMP). In Methylorubrum extorquens (strain PA1) (Methylobacterium extorquens), this protein is Orotidine 5'-phosphate decarboxylase.